The following is a 117-amino-acid chain: Large ribosomal subunit protein bL20 (117 aa).

The protein belongs to the bacterial ribosomal protein bL20 family.

In terms of biological role, binds directly to 23S ribosomal RNA and is necessary for the in vitro assembly process of the 50S ribosomal subunit. It is not involved in the protein synthesizing functions of that subunit. This Citrifermentans bemidjiense (strain ATCC BAA-1014 / DSM 16622 / JCM 12645 / Bem) (Geobacter bemidjiensis) protein is Large ribosomal subunit protein bL20.